The sequence spans 382 residues: Transcription factor MYB104 (382 aa).

HTH myb-type domains lie at 13 to 69 (KKTF…KPSL) and 70 to 120 (KKGP…MRLK). 2 DNA-binding regions (H-T-H motif) span residues 41-65 (WTHV…MNHL) and 93-116 (WSQM…NARR). The disordered stretch occupies residues 326–364 (IPKTDTSSESQLFQSSLRSHTDATPDIANTTGYVGSNER). Composition is skewed to polar residues over residues 329-343 (TDTS…SSLR) and 352-364 (IANT…SNER).

It localises to the nucleus. The chain is Transcription factor MYB104 (MYB104) from Arabidopsis thaliana (Mouse-ear cress).